The sequence spans 398 residues: Putative transposase y4qJ (398 aa).

This sequence belongs to the transposase 32 family.

The sequence is that of Putative transposase y4qJ from Sinorhizobium fredii (strain NBRC 101917 / NGR234).